The following is a 967-amino-acid chain: Isoleucine--tRNA ligase (967 aa).

The 'HIGH' region signature appears at 64 to 74 (PYANGNIHIGH). Residue Glu600 participates in L-isoleucyl-5'-AMP binding. The 'KMSKS' region signature appears at 641-645 (KQSKS). Residue Lys644 participates in ATP binding.

Belongs to the class-I aminoacyl-tRNA synthetase family. IleS type 1 subfamily. As to quaternary structure, monomer.

The protein resides in the cytoplasm. The enzyme catalyses tRNA(Ile) + L-isoleucine + ATP = L-isoleucyl-tRNA(Ile) + AMP + diphosphate. Its function is as follows. Catalyzes the attachment of isoleucine to tRNA(Ile). As IleRS can inadvertently accommodate and process structurally similar amino acids such as valine, to avoid such errors it has two additional distinct tRNA(Ile)-dependent editing activities. One activity is designated as 'pretransfer' editing and involves the hydrolysis of activated Val-AMP. The other activity is designated 'posttransfer' editing and involves deacylation of mischarged Val-tRNA(Ile). In Agrobacterium fabrum (strain C58 / ATCC 33970) (Agrobacterium tumefaciens (strain C58)), this protein is Isoleucine--tRNA ligase.